An 80-amino-acid chain; its full sequence is Small ribosomal subunit protein uS17c (80 aa).

The protein belongs to the universal ribosomal protein uS17 family. In terms of assembly, part of the 30S ribosomal subunit.

The protein localises to the plastid. Its subcellular location is the chloroplast. Its function is as follows. One of the primary rRNA binding proteins, it binds specifically to the 5'-end of 16S ribosomal RNA. The protein is Small ribosomal subunit protein uS17c (rps17) of Gracilaria tenuistipitata var. liui (Red alga).